A 210-amino-acid chain; its full sequence is uncharacterized protein (210 aa).

It is found in the mitochondrion. This is an uncharacterized protein from Schizosaccharomyces pombe (strain 972 / ATCC 24843) (Fission yeast).